The primary structure comprises 398 residues: Peptidyl-prolyl cis-trans isomerase D (398 aa).

The PPIase cyclophilin-type domain occupies 21–185 (FGSSPASRPG…EDVKIVDCGE (165 aa)). TPR repeat units follow at residues 229-262 (GLAL…LQLH), 282-323 (TSIQ…PSTE), and 335-368 (AKAF…APED).

It belongs to the cyclophilin-type PPIase family. PPIase D subfamily.

The protein resides in the cytoplasm. The enzyme catalyses [protein]-peptidylproline (omega=180) = [protein]-peptidylproline (omega=0). In terms of biological role, PPIases accelerate the folding of proteins. It catalyzes the cis-trans isomerization of proline imidic peptide bonds in oligopeptides. In Mycosarcoma maydis (Corn smut fungus), this protein is Peptidyl-prolyl cis-trans isomerase D (CPR6).